The chain runs to 389 residues: Inactive serine/threonine-protein kinase ZRK12 (389 aa).

One can recognise a Protein kinase domain in the interval 41–342 (SADEIRKATN…ETQFDSHQDI (302 aa)). Residues 47–55 (KATNNFGVS) and lysine 84 each bind ATP. Tyrosine 129 is modified (phosphotyrosine). At threonine 214 the chain carries Phosphothreonine. Tyrosine 222 is subject to Phosphotyrosine.

This sequence belongs to the protein kinase superfamily. Ser/Thr protein kinase family.

Together with RPP13L4/ZAR1, involved in the regulation of the ambient temperature-sensitive intersection of growth and immune response in the absence of pathogens. In Arabidopsis thaliana (Mouse-ear cress), this protein is Inactive serine/threonine-protein kinase ZRK12.